Here is a 43-residue protein sequence, read N- to C-terminus: Omega-ctenitoxin-Pr1a (43 aa).

Cystine bridges form between Cys2/Cys17, Cys9/Cys22, Cys16/Cys33, and Cys24/Cys31. The residue at position 43 (Gly43) is a Glycine amide.

Expressed by the venom gland.

The protein resides in the secreted. In terms of biological role, inhibits high-voltage activated calcium channels. Shifts the voltage-dependence for activation towards hyperpolarized membrane potentials for L- (Cav1), P/Q- (Cav2.1/CACNA1A) and R-type (Cav2.3/CACNA1E) calcium currents. Causes immediate agitation and clockwise gyration, followed by the gradual development of general flaccid paralysis when injected intracerebroventricular into mice at dose levels of 5 ug per mouse. This is Omega-ctenitoxin-Pr1a from Phoneutria reidyi (Brazilian Amazonian armed spider).